The chain runs to 347 residues: Pre-B-cell leukemia transcription factor 1 (347 aa).

The interval 1-37 (MDDQPRLMHSHPGVGMAGHPSLSQHMQDGTGANEGDV) is disordered. The PBC domain occupies 38-232 (GRKQDIGDIL…VMILRSRFLD (195 aa)). The PBC-A stretch occupies residues 45-124 (DILQQIMTIT…EGVAGPEKGG (80 aa)). The segment at 127-232 (AAAAAAAAAS…VMILRSRFLD (106 aa)) is PBC-B. A DNA-binding region (homeobox; TALE-type) is located at residues 233-295 (ARRKRRNFNK…NKRIRYKKNI (63 aa)). Polar residues predominate over residues 318–331 (VHGSQANSPSTPSS). Residues 318 to 347 (VHGSQANSPSTPSSAGGYPSPCYQSDRRIQ) are disordered.

Belongs to the TALE/PBX homeobox family. In terms of assembly, forms a heterodimer with isoform 2 of meis1; the interaction is necessary for neural fate induction. In terms of tissue distribution, shows broad, weak expression from blastula through gastrula stages. At stage 14/15, expressed in a broad arc that gives rise to the forebrain and eyes. More intensely expressed in the lateral neural folds (presumptive neural crest) and as horizontal stripes in the posterior neural plate that give rise to the hindbrain. As development proceeds, expression progresses posteriorly along the neural folds and at stage 21, expression is pronounced in the prospective hindbrain and in migratory neural crest cells. At later stages (stage 26), expression becomes intense within the dorsal portion of the forebrain, and in the optic cup, caudal branchial arch, peripheral to the pronephric anlage, and in the dorsal anterior half of the spinal cord. Expression remains robust in the hindbrain but gradually becomes more restricted. At stage 28, expressed in the dorsal lateral portion of the neural tube and in the somatic layer of the lateral plate mesoderm that surrounds the pronephric anlage.

Its subcellular location is the nucleus. In terms of biological role, acts as a transcriptional activator in complex with isoform 2 of meis1, to induce posterior neural and neural crest gene expression, and thereby specify hindbrain and neural crest cell fate. Binds to a highly conserved region in the promoter of the neural crest gene zic3. Required for the nuclear transport or retention of isoform 2 of meis1. The polypeptide is Pre-B-cell leukemia transcription factor 1 (pbx1) (Xenopus laevis (African clawed frog)).